We begin with the raw amino-acid sequence, 240 residues long: Ubiquinone biosynthesis O-methyltransferase (240 aa).

The S-adenosyl-L-methionine site is built by Arg44, Gly64, Asp85, and Met129.

This sequence belongs to the methyltransferase superfamily. UbiG/COQ3 family.

The enzyme catalyses a 3-demethylubiquinol + S-adenosyl-L-methionine = a ubiquinol + S-adenosyl-L-homocysteine + H(+). It carries out the reaction a 3-(all-trans-polyprenyl)benzene-1,2-diol + S-adenosyl-L-methionine = a 2-methoxy-6-(all-trans-polyprenyl)phenol + S-adenosyl-L-homocysteine + H(+). The protein operates within cofactor biosynthesis; ubiquinone biosynthesis. O-methyltransferase that catalyzes the 2 O-methylation steps in the ubiquinone biosynthetic pathway. The protein is Ubiquinone biosynthesis O-methyltransferase of Escherichia fergusonii (strain ATCC 35469 / DSM 13698 / CCUG 18766 / IAM 14443 / JCM 21226 / LMG 7866 / NBRC 102419 / NCTC 12128 / CDC 0568-73).